Here is a 567-residue protein sequence, read N- to C-terminus: Phenylalanine--tRNA ligase beta subunit (567 aa).

The B5 domain occupies 284 to 359 (FAVRTKHVSH…RAYDFNDLTP (76 aa)). Mg(2+) is bound by residues Asp-337, Asp-343, Asp-346, and Asp-347.

Belongs to the phenylalanyl-tRNA synthetase beta subunit family. Type 2 subfamily. As to quaternary structure, tetramer of two alpha and two beta subunits. Mg(2+) is required as a cofactor.

It localises to the cytoplasm. The catalysed reaction is tRNA(Phe) + L-phenylalanine + ATP = L-phenylalanyl-tRNA(Phe) + AMP + diphosphate + H(+). This is Phenylalanine--tRNA ligase beta subunit from Halobacterium salinarum (strain ATCC 29341 / DSM 671 / R1).